Reading from the N-terminus, the 763-residue chain is Eukaryotic translation initiation factor 3 subunit B (763 aa).

The interval 1-136 (MKNFLPRTLK…LFVECGSMND (136 aa)) is sufficient for interaction with HCR1 and TIF32. Positions 28-261 (RNTQLKRSKI…GVTAWGGPNF (234 aa)) are sufficient for interaction with PIC8. Position 61 is a phosphoserine (S61). Phosphotyrosine is present on Y67. The RRM domain maps to 77–162 (QYIVVNGAPV…HRLFLYTMKD (86 aa)). WD repeat units follow at residues 228–266 (RENWSTNYVRFSPKGTYLFSYHQQGVTAWGGPNFDRLRR), 277–325 (VSPN…LMAT), 373–416 (LKPS…SACT), 484–524 (ELKD…IRFY), 544–589 (IPKT…EKNI), and 605–650 (PTYS…VKED). Residue S669 is modified to Phosphoserine.

This sequence belongs to the eIF-3 subunit B family. The eukaryotic translation initiation factor 3 (eIF-3) core complex is composed of TIF32, PRT1, NIP1, TIF34 and TIF35. A subcomplex of TIF32, NIP1 and PRT1 mediates the interaction with eIF-1, TIF5/eIF-5 and HCR1. The factors eIF-1, eIF-2, eIF-3, TIF5/eIF-5 and methionyl-tRNAi form a multifactor complex (MFC) that may bind to the 40S ribosome.

The protein resides in the cytoplasm. Functionally, RNA-binding component of the eukaryotic translation initiation factor 3 (eIF-3) complex, which is involved in protein synthesis of a specialized repertoire of mRNAs and, together with other initiation factors, stimulates binding of mRNA and methionyl-tRNAi to the 40S ribosome. The eIF-3 complex specifically targets and initiates translation of a subset of mRNAs involved in cell proliferation. This chain is Eukaryotic translation initiation factor 3 subunit B, found in Saccharomyces cerevisiae (strain ATCC 204508 / S288c) (Baker's yeast).